Here is a 508-residue protein sequence, read N- to C-terminus: Aromatic-L-amino-acid decarboxylase (508 aa).

Thr-82 is a substrate binding site. Pyridoxal 5'-phosphate is bound by residues Ala-148 and Ser-149. Position 192 (His-192) interacts with substrate. Residues Thr-246 and Asn-300 each contribute to the pyridoxal 5'-phosphate site. Residue Lys-303 is modified to N6-(pyridoxal phosphate)lysine.

It belongs to the group II decarboxylase family. Homodimer. Pyridoxal 5'-phosphate is required as a cofactor.

The catalysed reaction is L-dopa + H(+) = dopamine + CO2. The enzyme catalyses 5-hydroxy-L-tryptophan + H(+) = serotonin + CO2. Catalyzes the decarboxylation of L-3,4-dihydroxyphenylalanine (DOPA) to dopamine, L-5-hydroxytryptophan to serotonin and L-tryptophan to tryptamine. This chain is Aromatic-L-amino-acid decarboxylase (Ddc), found in Manduca sexta (Tobacco hawkmoth).